Consider the following 68-residue polypeptide: Alpha-conotoxin Lp1.4 (68 aa).

Positions 1-21 (MGMRMMSIMFMLVVLATTVVS) are cleaved as a signal peptide. Residues 22 to 48 (FTSDRALDAMNAAASKKASRLIALAVR) constitute a propeptide that is removed on maturation. Intrachain disulfides connect cysteine 50–cysteine 56 and cysteine 51–cysteine 64. Residues 52 to 54 (SHP) form a ser-Xaa-Pro motif, crucial for potent interaction with nAChR region. Aspartate 65 is subject to Aspartic acid 1-amide.

It belongs to the conotoxin A superfamily. In terms of tissue distribution, expressed by the venom duct.

The protein resides in the secreted. In terms of biological role, alpha-conotoxins act on postsynaptic membranes, they bind to the nicotinic acetylcholine receptors (nAChR) and thus inhibit them. This toxin inhibits mouse muscle alpha-1-beta-1-gamma-delta (CHRNA1-CHRNB1-CHRNG-CHRND), and weakly rat neuronal alpha-6/alpha-3-beta-2 (CHRNA6/CHRNA3-CHRNB2). The polypeptide is Alpha-conotoxin Lp1.4 (Conus leopardus (Leopard cone)).